A 223-amino-acid chain; its full sequence is MASATVRNVPLLDDDTIPFGEEDEMRDPSRAGQKYTHPYVTFFHLFFRGAAILIYMFCGWFSDSFITSFVFVVLFLSADFWTVKNISGRLLVGLRWWNYVDDDGVSHWVFESKNSESYQSRVNKNEQRIFWLGLILCPVFWGLFFLFALFGLKFKWLLLVMIAIALNAANLYGYVKCNYGANKDLNSAATDFVKTQFFKNAVDIMTRPSGAPPPTNVRPTGVV.

The segment at 1 to 30 (MASATVRNVPLLDDDTIPFGEEDEMRDPSR) is disordered. Acidic residues predominate over residues 12–25 (LDDDTIPFGEEDEM). The next 4 helical transmembrane spans lie at 35-55 (YTHPYVTFFHLFFRGAAILIY), 56-76 (MFCGWFSDSFITSFVFVVLFL), 129-149 (IFWLGLILCPVFWGLFFLFAL), and 154-174 (FKWLLLVMIAIALNAANLYGY).

Belongs to the TVP23 family.

Its subcellular location is the membrane. This is an uncharacterized protein from Drosophila melanogaster (Fruit fly).